The chain runs to 91 residues: UPF0213 protein NMA2126 (91 aa).

The GIY-YIG domain maps to 4–83; that stretch reads SNWSLYLILC…AAQKRKLWEQ (80 aa).

Belongs to the UPF0213 family.

The protein is UPF0213 protein NMA2126 of Neisseria meningitidis serogroup A / serotype 4A (strain DSM 15465 / Z2491).